Reading from the N-terminus, the 279-residue chain is Isopentenyl-diphosphate delta-isomerase idi1 (279 aa).

Lysine 78 is a binding site for substrate. Mg(2+) contacts are provided by histidine 82 and histidine 93. The region spanning leucine 91–leucine 249 is the Nudix hydrolase domain. Substrate contacts are provided by glutamine 111 and lysine 116. Cysteine 128 is a catalytic residue. Serine 129 provides a ligand contact to substrate. The Nudix box signature appears at serine 129 to glycine 162. Residues glutamate 191 and glutamate 193 each contribute to the Mg(2+) site. Residue glutamate 193 is part of the active site.

This sequence belongs to the IPP isomerase type 1 family. The cofactor is Mg(2+).

It catalyses the reaction isopentenyl diphosphate = dimethylallyl diphosphate. It participates in isoprenoid biosynthesis; dimethylallyl diphosphate biosynthesis; dimethylallyl diphosphate from isopentenyl diphosphate: step 1/1. Isopentenyl-diphosphate delta-isomerase; part of the second module of ergosterol biosynthesis pathway that includes the middle steps of the pathway. Idi1 catalyzes the 1,3-allylic rearrangement of isopentenyl (IPP) to its highly electrophilic allylic isomer, dimethylallyl diphosphate (DMAPP). The second module is carried out in the vacuole and involves the formation of farnesyl diphosphate, which is also an important intermediate in the biosynthesis of ubiquinone, dolichol, heme and prenylated proteins. Activity by the mevalonate kinase erg12 (AFUA_4G07780) first converts mevalonate into 5-phosphomevalonate. 5-phosphomevalonate is then further converted to 5-diphosphomevalonate by the phosphomevalonate kinase erg8 (AFUA_5G10680). The diphosphomevalonate decarboxylase mvd1 (AFUA_4G07130) then produces isopentenyl diphosphate. The isopentenyl-diphosphate delta-isomerase idi1 (AFUA_6G11160) then catalyzes the 1,3-allylic rearrangement of the homoallylic substrate isopentenyl (IPP) to its highly electrophilic allylic isomer, dimethylallyl diphosphate (DMAPP). Finally the farnesyl diphosphate synthase erg20 (AFUA_5G02450) catalyzes the sequential condensation of isopentenyl pyrophosphate with dimethylallyl pyrophosphate, and then with the resultant geranylpyrophosphate to the ultimate product farnesyl pyrophosphate. The protein is Isopentenyl-diphosphate delta-isomerase idi1 of Aspergillus fumigatus (strain ATCC MYA-4609 / CBS 101355 / FGSC A1100 / Af293) (Neosartorya fumigata).